We begin with the raw amino-acid sequence, 419 residues long: NF-kappa-B essential modulator (419 aa).

The tract at residues 1–46 (MSRTPWKSQPCEMVQPSGGPAGDQDVLGEESSLGKPTMLHLPSEQG) is disordered. The tract at residues 1–197 (MSRTPWKSQP…REALQQQHSV (197 aa)) is required for interaction with and ubiquitination by MARCHF2. Ser31, Ser43, Ser68, and Ser85 each carry phosphoserine. The segment at 44–111 (EQGAPETFQR…RLVERLSLEK (68 aa)) is interaction with CHUK/IKBKB. A coiled-coil region spans residues 100-353 (ARRLVERLSL…KTSCQESARI (254 aa)). Residues Lys111, Lys139, Lys143, Lys226, Lys246, and Lys264 each participate in a glycyl lysine isopeptide (Lys-Gly) (interchain with G-Cter in ubiquitin) cross-link. Positions 150-257 (LGELQESQSR…SVVSSERNRG (108 aa)) are interaction with TANK. The segment at 242-350 (DNHIKSSVVS…SRLKTSCQES (109 aa)) is ubiquitin-binding (UBAN). Residues 246–365 (KSSVVSSERN…MRKRHVEVSQ (120 aa)) form a self-association region. Residues 251 to 419 (SSERNRGLQL…LQIHVMECIE (169 aa)) form a required for interaction with TNFAIP3 region. Lys277 is covalently cross-linked (Glycyl lysine isopeptide (Lys-Gly) (interchain with G-Cter in SUMO); alternate). Residue Lys277 forms a Glycyl lysine isopeptide (Lys-Gly) (interchain with G-Cter in ubiquitin); alternate linkage. Glycyl lysine isopeptide (Lys-Gly) (interchain with G-Cter in ubiquitin) cross-links involve residues Lys283, Lys285, Lys292, and Lys302. Residue Lys309 forms a Glycyl lysine isopeptide (Lys-Gly) (interchain with G-Cter in SUMO); alternate linkage. Residue Lys309 forms a Glycyl lysine isopeptide (Lys-Gly) (interchain with G-Cter in ubiquitin); alternate linkage. Residues 322 to 343 (LAERKELLQEQLEQLQREYSRL) are leucine-zipper. A Glycyl lysine isopeptide (Lys-Gly) (interchain with G-Cter in ubiquitin) cross-link involves residue Lys326. The interval 363-394 (VSQPTLPPAPAHHSFHPALPSQRRSPPEEPPN) is disordered. Ser376 and Ser387 each carry phosphoserine. The segment at 382–419 (PSQRRSPPEEPPNFCCPKCQYQAPDMDTLQIHVMECIE) is interaction with CYLD. The segment at 389-419 (PEEPPNFCCPKCQYQAPDMDTLQIHVMECIE) adopts a CCHC NOA-type zinc-finger fold. Cys397 serves as a coordination point for Zn(2+). Residue Lys399 forms a Glycyl lysine isopeptide (Lys-Gly) (interchain with G-Cter in ubiquitin) linkage. 3 residues coordinate Zn(2+): Cys400, His413, and Cys417.

Homodimer; disulfide-linked. Component of the I-kappa-B-kinase (IKK) core complex consisting of CHUK, IKBKB and IKBKG; probably four alpha/CHUK-beta/IKBKB dimers are associated with four gamma/IKBKG subunits. The IKK core complex seems to associate with regulatory or adapter proteins to form a IKK-signalosome holo-complex. The IKK complex associates with TERF2IP/RAP1, leading to promote IKK-mediated phosphorylation of RELA/p65. Part of a complex composed of NCOA2, NCOA3, CHUK/IKKA, IKBKB, IKBKG and CREBBP. Interacts with COPS3, CYLD, NALP2, TRPC4AP and PIDD1. Interacts with ATM; the complex is exported from the nucleus. Interacts with TRAF6. Interacts with IKBKE. Interacts with TANK; the interaction is enhanced by IKBKE and TBK1. Part of a ternary complex consisting of TANK, IKBKB and IKBKG. Interacts with ZFAND5. Interacts with RIPK2. Interacts with TNIP1 and TNFAIP3; TNIP1 facilitates the TNFAIP3-mediated de-ubiquitination of IKBKG. Interacts with TNFAIP3; the interaction is induced by TNF stimulation and by polyubiquitin. Binds (via UBAN region) polyubiquitin; binds both 'Lys-63'-linked and linear polyubiquitin, with higher affinity for linear ubiquitin. Interacts with NLRP10. Interacts with TANK; this interaction increases in response to DNA damage. Interacts with USP10; this interaction increases in response to DNA damage. Interacts with ZC3H12A; this interaction increases in response to DNA damage. Interacts with IFIT5; the interaction synergizes the recruitment of IKK to MAP3K7 and enhances IKK phosphorylation. Interacts with TRIM29; this interaction induces IKBKG/NEMO ubiquitination and proteolytic degradation. Interacts with TRIM13; this interaction leads to IKBKG/NEMO ubiquitination. Interacts with ARFIP2. Interacts with RIPK1. Interacts with (ubiquitinated) BCL10; interaction with polyubiquitinated BCL10 via both 'Lys-63'-linked and linear ubiquitin is required for TCR-induced NF-kappa-B activation. Interacts with MARCHF2; during the late stages of macrophage viral and bacterial infection; the interaction leads to ubiquitination and degradation of IKBKG/NEMO. Phosphorylation at Ser-68 attenuates aminoterminal homodimerization. Post-translationally, polyubiquitinated on Lys-285 via 'Lys-63'-linked ubiquitin; the ubiquitination is mediated downstream of NOD2 and RIPK2 and probably plays a role in signaling by facilitating interactions with ubiquitin domain-containing proteins and activates the NF-kappa-B pathway. Polyubiquitinated on Lys-285 and Lys-399 through 'Lys-63'-linked ubiquitin; the ubiquitination is mediated by BCL10, MALT1 and TRAF6 and probably plays a role in signaling by facilitating interactions with ubiquitin domain-containing proteins and activates the NF-kappa-B pathway. Monoubiquitinated on Lys-277 and Lys-309; promotes nuclear export. Polyubiquitinated through 'Lys-27' by TRIM23; involved in antiviral innate and inflammatory responses. Linear polyubiquitinated on Lys-111, Lys-143, Lys-226, Lys-246, Lys-264, Lys-277, Lys-285, Lys-292, Lys-302, Lys-309 and Lys-326; the head-to-tail polyubiquitination is mediated by the LUBAC complex and plays a key role in NF-kappa-B activation. Deubiquitinated by USP10 in a TANK-dependent and -independent manner, leading to the negative regulation of NF-kappa-B signaling upon DNA damage. Ubiquitinated at Lys-326 by MARCHF2 following bacterial and viral infection which leads to its degradation. In terms of processing, sumoylated on Lys-277 and Lys-309 with SUMO1; the modification results in phosphorylation of Ser-85 by ATM leading to a replacement of the sumoylation by mono-ubiquitination on these residues. Neddylated by TRIM40, resulting in stabilization of NFKBIA and down-regulation of NF-kappa-B activity. Post-translationally, (Microbial infection) Cleaved by porcine reproductive and respiratory syndrome virus serine protease nsp4 after Glu-349. The cleavage inhibits NEMO proper function.

It is found in the cytoplasm. The protein resides in the nucleus. Functionally, regulatory subunit of the IKK core complex which phosphorylates inhibitors of NF-kappa-B thus leading to the dissociation of the inhibitor/NF-kappa-B complex and ultimately the degradation of the inhibitor. Its binding to scaffolding polyubiquitin plays a key role in IKK activation by multiple signaling receptor pathways. Can recognize and bind both 'Lys-63'-linked and linear polyubiquitin upon cell stimulation, with a much highr affinity for linear polyubiquitin. Could be implicated in NF-kappa-B-mediated protection from cytokine toxicity. Essential for viral activation of IRF3. Involved in TLR3- and IFIH1-mediated antiviral innate response; this function requires 'Lys-27'-linked polyubiquitination. This chain is NF-kappa-B essential modulator (IKBKG), found in Sus scrofa (Pig).